The following is a 258-amino-acid chain: MGQTIKEIKATLAKLTDLSAKEFLEYEADERAGVQAALKSRKKQILAELAEEARLEQMLEFEKELYGQEIQLIAGIDEVGRGPLAGPVVTAAVILPKNCKIRGLNDSKKVPKSKHHAILSEIQEKALAIGIGIVDAEKIDEVNIYEATKIAMIQAVSKLSVKPEHLLIDAMVLDFPIAQTKIIHGDARSASIAAASIVAKVTRDEMMKEFALEFPEYDFEHNAGYGTAKHLEALTKYGITRIHRKSYEPIKTMVNFKS.

In terms of domain architecture, RNase H type-2 spans 71-258 (QLIAGIDEVG…PIKTMVNFKS (188 aa)). The a divalent metal cation site is built by aspartate 77, glutamate 78, and aspartate 169.

This sequence belongs to the RNase HII family. It depends on Mn(2+) as a cofactor. Mg(2+) serves as cofactor.

The protein localises to the cytoplasm. It carries out the reaction Endonucleolytic cleavage to 5'-phosphomonoester.. Functionally, endonuclease that specifically degrades the RNA of RNA-DNA hybrids. This Lactococcus lactis subsp. lactis (strain IL1403) (Streptococcus lactis) protein is Ribonuclease HII (rnhB).